Here is a 1004-residue protein sequence, read N- to C-terminus: Glycine dehydrogenase (decarboxylating), mitochondrial (1004 aa).

Lys738 bears the N6-(pyridoxal phosphate)lysine mark.

Belongs to the GcvP family. Homodimer. Interacts with GCSH. The glycine cleavage system is composed of four proteins: P (GLDC), T (GCST), L (DLD) and H (GCSH). The cofactor is pyridoxal 5'-phosphate. As to expression, liver (at protein level).

It is found in the mitochondrion. The catalysed reaction is N(6)-[(R)-lipoyl]-L-lysyl-[glycine-cleavage complex H protein] + glycine + H(+) = N(6)-[(R)-S(8)-aminomethyldihydrolipoyl]-L-lysyl-[glycine-cleavage complex H protein] + CO2. Its activity is regulated as follows. Stimulated by lipoic acid. Inhibited in presence of methylamine. Functionally, the glycine cleavage system catalyzes the degradation of glycine. The P protein (GLDC) binds the alpha-amino group of glycine through its pyridoxal phosphate cofactor; CO(2) is released and the remaining methylamine moiety is then transferred to the lipoamide cofactor of the H protein (GCSH). The sequence is that of Glycine dehydrogenase (decarboxylating), mitochondrial from Gallus gallus (Chicken).